The sequence spans 113 residues: Large ribosomal subunit protein bL17 (113 aa).

It belongs to the bacterial ribosomal protein bL17 family. Part of the 50S ribosomal subunit. Contacts protein L32.

The sequence is that of Large ribosomal subunit protein bL17 from Clostridium botulinum (strain Loch Maree / Type A3).